Reading from the N-terminus, the 579-residue chain is YTH domain-containing family protein 2 (579 aa).

The interval 1–45 (MSASSLLEQRPKGQGNKVQNGSVHQKDGLNDDDFEPYLSPQARPN) is disordered. Ser-2 is modified (N-acetylserine). A phosphoserine mark is found at Ser-2, Ser-4, Ser-5, Ser-22, Ser-39, and Ser-196. Positions 2 to 384 (SASSLLEQRP…QAGSGSTPSE (383 aa)) are localization to mRNA processing bodies (P-bodies). The interval 247-387 (AKQQPKLKTK…SGSTPSEPHP (141 aa)) is disordered. A compositionally biased stretch (polar residues) spans 291 to 316 (ALVQNIGQPTQGSPQHVGQQANNSPP). Residues 337 to 349 (AQLSVQQQAAQPT) show a composition bias toward low complexity. Position 359 is a phosphoserine (Ser-359). Residues 359–371 (SGFGHNGVDGNGV) are compositionally biased toward gly residues. Residues 372–383 (GQSQAGSGSTPS) show a composition bias toward polar residues. Positions 385–579 (PHPVLEKLRS…VKKERQGRGK (195 aa)) are interaction with m6A-containing mRNAs. Ser-394 is modified (phosphoserine). Residues 410-544 (GRVFIIKSYS…EKAKQVLKII (135 aa)) enclose the YTH domain. Residues 416 to 418 (KSY), Asp-422, 432 to 433 (WC), Asn-462, Trp-486, and Trp-491 each bind RNA.

The protein belongs to the YTHDF family. YTHDF2 subfamily. As to quaternary structure, interacts with CNOT1; interaction is direct and promotes recruitment of the CCR4-NOT complex. Interacts with YTHDF3. Interacts with RIDA/HRSP12; interaction leads to recruitment of the ribonuclease P/MRP complex. In terms of processing, ubiquitinated by the SCF(SKP2) complex, leading to its degradation.

It localises to the cytoplasm. The protein resides in the cytosol. It is found in the P-body. Its subcellular location is the stress granule. The protein localises to the nucleus. In terms of biological role, specifically recognizes and binds N6-methyladenosine (m6A)-containing RNAs, and regulates their stability. M6A is a modification present at internal sites of mRNAs and some non-coding RNAs and plays a role in mRNA stability and processing. Acts as a regulator of mRNA stability by promoting degradation of m6A-containing mRNAs via interaction with the CCR4-NOT and ribonuclease P/MRP complexes, depending on the context. The YTHDF paralogs (YTHDF1, YTHDF2 and YTHDF3) share m6A-containing mRNAs targets and act redundantly to mediate mRNA degradation and cellular differentiation. M6A-containing mRNAs containing a binding site for RIDA/HRSP12 (5'-GGUUC-3') are preferentially degraded by endoribonucleolytic cleavage: cooperative binding of RIDA/HRSP12 and YTHDF2 to transcripts leads to recruitment of the ribonuclease P/MRP complex. Other m6A-containing mRNAs undergo deadenylation via direct interaction between YTHDF2 and CNOT1, leading to recruitment of the CCR4-NOT and subsequent deadenylation of m6A-containing mRNAs. Required maternally to regulate oocyte maturation: probably acts by binding to m6A-containing mRNAs, thereby regulating maternal transcript dosage during oocyte maturation, which is essential for the competence of oocytes to sustain early zygotic development. Also required during spermatogenesis: regulates spermagonial adhesion by promoting degradation of m6A-containing transcripts coding for matrix metallopeptidases. Also involved in hematopoietic stem cells specification by binding to m6A-containing mRNAs, leading to promote their degradation. Also acts as a regulator of neural development by promoting m6A-dependent degradation of neural development-related mRNA targets. Inhibits neural specification of induced pluripotent stem cells by binding to methylated neural-specific mRNAs and promoting their degradation, thereby restraining neural differentiation. Regulates circadian regulation of hepatic lipid metabolism: acts by promoting m6A-dependent degradation of PPARA transcripts. Regulates the innate immune response to infection by inhibiting the type I interferon response: acts by binding to m6A-containing IFNB transcripts and promoting their degradation. May also act as a promoter of cap-independent mRNA translation following heat shock stress: upon stress, relocalizes to the nucleus and specifically binds mRNAs with some m6A methylation mark at their 5'-UTR, protecting demethylation of mRNAs by FTO, thereby promoting cap-independent mRNA translation. Regulates mitotic entry by promoting the phase-specific m6A-dependent degradation of WEE1 transcripts. Promotes formation of phase-separated membraneless compartments, such as P-bodies or stress granules, by undergoing liquid-liquid phase separation upon binding to mRNAs containing multiple m6A-modified residues: polymethylated mRNAs act as a multivalent scaffold for the binding of YTHDF proteins, juxtaposing their disordered regions and thereby leading to phase separation. The resulting mRNA-YTHDF complexes then partition into different endogenous phase-separated membraneless compartments, such as P-bodies, stress granules or neuronal RNA granules. May also recognize and bind RNAs modified by C5-methylcytosine (m5C) and act as a regulator of rRNA processing. This Macaca fascicularis (Crab-eating macaque) protein is YTH domain-containing family protein 2.